Consider the following 171-residue polypeptide: Crossover junction endodeoxyribonuclease RuvC (171 aa).

Residues Asp-7, Glu-67, and Asp-139 contribute to the active site. Mg(2+)-binding residues include Asp-7, Glu-67, and Asp-139.

Belongs to the RuvC family. As to quaternary structure, homodimer which binds Holliday junction (HJ) DNA. The HJ becomes 2-fold symmetrical on binding to RuvC with unstacked arms; it has a different conformation from HJ DNA in complex with RuvA. In the full resolvosome a probable DNA-RuvA(4)-RuvB(12)-RuvC(2) complex forms which resolves the HJ. Requires Mg(2+) as cofactor.

It is found in the cytoplasm. It carries out the reaction Endonucleolytic cleavage at a junction such as a reciprocal single-stranded crossover between two homologous DNA duplexes (Holliday junction).. Its function is as follows. The RuvA-RuvB-RuvC complex processes Holliday junction (HJ) DNA during genetic recombination and DNA repair. Endonuclease that resolves HJ intermediates. Cleaves cruciform DNA by making single-stranded nicks across the HJ at symmetrical positions within the homologous arms, yielding a 5'-phosphate and a 3'-hydroxyl group; requires a central core of homology in the junction. The consensus cleavage sequence is 5'-(A/T)TT(C/G)-3'. Cleavage occurs on the 3'-side of the TT dinucleotide at the point of strand exchange. HJ branch migration catalyzed by RuvA-RuvB allows RuvC to scan DNA until it finds its consensus sequence, where it cleaves and resolves the cruciform DNA. This Geotalea uraniireducens (strain Rf4) (Geobacter uraniireducens) protein is Crossover junction endodeoxyribonuclease RuvC.